The sequence spans 185 residues: Acireductone dioxygenase (185 aa).

Fe(2+) contacts are provided by H97, H99, E103, and H141. Ni(2+)-binding residues include H97, H99, E103, and H141.

The protein belongs to the acireductone dioxygenase (ARD) family. Monomer. Requires Fe(2+) as cofactor. Ni(2+) serves as cofactor.

It catalyses the reaction 1,2-dihydroxy-5-(methylsulfanyl)pent-1-en-3-one + O2 = 3-(methylsulfanyl)propanoate + CO + formate + 2 H(+). The catalysed reaction is 1,2-dihydroxy-5-(methylsulfanyl)pent-1-en-3-one + O2 = 4-methylsulfanyl-2-oxobutanoate + formate + 2 H(+). It functions in the pathway amino-acid biosynthesis; L-methionine biosynthesis via salvage pathway; L-methionine from S-methyl-5-thio-alpha-D-ribose 1-phosphate: step 5/6. In terms of biological role, catalyzes 2 different reactions between oxygen and the acireductone 1,2-dihydroxy-3-keto-5-methylthiopentene (DHK-MTPene) depending upon the metal bound in the active site. Fe-containing acireductone dioxygenase (Fe-ARD) produces formate and 2-keto-4-methylthiobutyrate (KMTB), the alpha-ketoacid precursor of methionine in the methionine recycle pathway. Ni-containing acireductone dioxygenase (Ni-ARD) produces methylthiopropionate, carbon monoxide and formate, and does not lie on the methionine recycle pathway. The sequence is that of Acireductone dioxygenase from Stenotrophomonas maltophilia (strain K279a).